The chain runs to 469 residues: IME2-dependent-signaling protein (469 aa).

Met1 is subject to N-acetylmethionine. Thr13 is subject to Phosphothreonine. 3 disordered regions span residues 22–55, 67–92, and 117–143; these read KSWS…PATM, ARGS…QQQQ, and DLTL…PPLT. Phosphoserine is present on residues Ser23, Ser27, and Ser39. Polar residues-rich tracts occupy residues 25–42 and 67–82; these read SESQ…SPIG and ARGS…GSSQ. Phosphoserine is present on residues Ser122, Ser130, Ser136, Ser147, and Ser148.

Seems to act indirectly to modify IME2 activity, thus permitting IME2 to carry out later meiotic functions. This chain is IME2-dependent-signaling protein (IDS2), found in Saccharomyces cerevisiae (strain ATCC 204508 / S288c) (Baker's yeast).